The sequence spans 208 residues: Protein-L-isoaspartate O-methyltransferase (208 aa).

Serine 59 is an active-site residue.

This sequence belongs to the methyltransferase superfamily. L-isoaspartyl/D-aspartyl protein methyltransferase family.

The protein localises to the cytoplasm. The catalysed reaction is [protein]-L-isoaspartate + S-adenosyl-L-methionine = [protein]-L-isoaspartate alpha-methyl ester + S-adenosyl-L-homocysteine. In terms of biological role, catalyzes the methyl esterification of L-isoaspartyl residues in peptides and proteins that result from spontaneous decomposition of normal L-aspartyl and L-asparaginyl residues. It plays a role in the repair and/or degradation of damaged proteins. The polypeptide is Protein-L-isoaspartate O-methyltransferase (Klebsiella pneumoniae subsp. pneumoniae (strain ATCC 700721 / MGH 78578)).